A 379-amino-acid chain; its full sequence is Cytochrome b (379 aa).

Helical transmembrane passes span F33–M53, W77–I98, W113–L133, and F178–L198. Heme b contacts are provided by H83 and H97. Positions 182 and 196 each coordinate heme b. Position 201 (H201) interacts with a ubiquinone. The next 4 helical transmembrane spans lie at Y226–S246, L288–H308, F320–G340, and F347–P367.

It belongs to the cytochrome b family. As to quaternary structure, the cytochrome bc1 complex contains 3 respiratory subunits (MT-CYB, CYC1 and UQCRFS1), 2 core proteins (UQCRC1 and UQCRC2) and probably 6 low-molecular weight proteins. It depends on heme b as a cofactor.

It localises to the mitochondrion inner membrane. Component of the ubiquinol-cytochrome c reductase complex (complex III or cytochrome b-c1 complex) that is part of the mitochondrial respiratory chain. The b-c1 complex mediates electron transfer from ubiquinol to cytochrome c. Contributes to the generation of a proton gradient across the mitochondrial membrane that is then used for ATP synthesis. This Iguana iguana (Common iguana) protein is Cytochrome b (MT-CYB).